The sequence spans 331 residues: Adenosine deaminase (331 aa).

Residues His12 and His14 each contribute to the Zn(2+) site. Substrate contacts are provided by His14, Asp16, and Gly170. His197 lines the Zn(2+) pocket. The Proton donor role is filled by Glu200. Asp278 serves as a coordination point for Zn(2+). Substrate is bound at residue Asp279.

This sequence belongs to the metallo-dependent hydrolases superfamily. Adenosine and AMP deaminases family. Adenosine deaminase subfamily. The cofactor is Zn(2+).

The catalysed reaction is adenosine + H2O + H(+) = inosine + NH4(+). It carries out the reaction 2'-deoxyadenosine + H2O + H(+) = 2'-deoxyinosine + NH4(+). Its function is as follows. Catalyzes the hydrolytic deamination of adenosine and 2-deoxyadenosine. This chain is Adenosine deaminase, found in Shewanella baltica (strain OS223).